We begin with the raw amino-acid sequence, 336 residues long: UPF0324 membrane protein lp_2841 (336 aa).

A run of 9 helical transmembrane segments spans residues 5–22, 26–48, 84–106, 116–138, 150–172, 204–226, 255–277, 282–304, and 311–333; these read GILP…ISQG, FVPA…NTFL, IGGF…ALWL, VRML…IAPV, ITLV…MAVF, TVQF…VLIF, WYVA…AIIG, TISS…LVNF, and LALY…ITLL.

Belongs to the UPF0324 family.

It localises to the cell membrane. In Lactiplantibacillus plantarum (strain ATCC BAA-793 / NCIMB 8826 / WCFS1) (Lactobacillus plantarum), this protein is UPF0324 membrane protein lp_2841.